The primary structure comprises 206 residues: FMN-dependent NADH:quinone oxidoreductase (206 aa).

FMN-binding positions include 15–17 (SVS), 94–97 (MYNF), and 138–141 (TRGG).

Belongs to the azoreductase type 1 family. Homodimer. It depends on FMN as a cofactor.

The enzyme catalyses 2 a quinone + NADH + H(+) = 2 a 1,4-benzosemiquinone + NAD(+). It carries out the reaction N,N-dimethyl-1,4-phenylenediamine + anthranilate + 2 NAD(+) = 2-(4-dimethylaminophenyl)diazenylbenzoate + 2 NADH + 2 H(+). Its function is as follows. Quinone reductase that provides resistance to thiol-specific stress caused by electrophilic quinones. Also exhibits azoreductase activity. Catalyzes the reductive cleavage of the azo bond in aromatic azo compounds to the corresponding amines. This is FMN-dependent NADH:quinone oxidoreductase from Rhizobium meliloti (strain 1021) (Ensifer meliloti).